Consider the following 426-residue polypeptide: Serine--tRNA ligase (426 aa).

A disordered region spans residues 36–66 (KRKHLQERTQDLQSQRNTISKEIGQKKAKGE). Over residues 46-55 (DLQSQRNTIS) the composition is skewed to polar residues. Residue 233 to 235 (TAE) coordinates L-serine. 264 to 266 (RSE) serves as a coordination point for ATP. Glutamate 287 contributes to the L-serine binding site. Position 351–354 (351–354 (EISS)) interacts with ATP. Serine 387 contributes to the L-serine binding site.

The protein belongs to the class-II aminoacyl-tRNA synthetase family. Type-1 seryl-tRNA synthetase subfamily. Homodimer. The tRNA molecule binds across the dimer.

The protein resides in the cytoplasm. It catalyses the reaction tRNA(Ser) + L-serine + ATP = L-seryl-tRNA(Ser) + AMP + diphosphate + H(+). The enzyme catalyses tRNA(Sec) + L-serine + ATP = L-seryl-tRNA(Sec) + AMP + diphosphate + H(+). The protein operates within aminoacyl-tRNA biosynthesis; selenocysteinyl-tRNA(Sec) biosynthesis; L-seryl-tRNA(Sec) from L-serine and tRNA(Sec): step 1/1. Catalyzes the attachment of serine to tRNA(Ser). Is also able to aminoacylate tRNA(Sec) with serine, to form the misacylated tRNA L-seryl-tRNA(Sec), which will be further converted into selenocysteinyl-tRNA(Sec). This Francisella tularensis subsp. tularensis (strain FSC 198) protein is Serine--tRNA ligase.